A 343-amino-acid chain; its full sequence is Probable beta-1,3-galactosyltransferase 13 (343 aa).

A helical; Signal-anchor for type II membrane protein membrane pass occupies residues 22–42; that stretch reads LIVFTSLAIGLTGFLFGLSTI. N265 carries an N-linked (GlcNAc...) asparagine glycan.

It belongs to the glycosyltransferase 31 family. The cofactor is Mn(2+).

The protein resides in the golgi apparatus membrane. It functions in the pathway protein modification; protein glycosylation. Its function is as follows. Beta-1,3-galactosyltransferase that transfers galactose from UDP-galactose to substrates with a terminal glycosyl residue. In Arabidopsis thaliana (Mouse-ear cress), this protein is Probable beta-1,3-galactosyltransferase 13 (B3GALT13).